Here is a 650-residue protein sequence, read N- to C-terminus: p-hydroxybenzoic acid efflux pump subunit AaeB (650 aa).

Helical transmembrane passes span 7–27, 32–52, 61–81, 87–107, 115–135, 148–168, 365–385, 402–422, 426–446, 450–470, and 478–498; these read FPIK…HLNL, WAVM…GGDP, GILR…IMIA, VVML…SSLI, LGLA…SGGL, EIIL…PRSI, LFWL…LGVI, FVYG…YILP, QSAV…GILI, QIGT…DNPM, and IDNA…ILLI.

Belongs to the aromatic acid exporter ArAE (TC 2.A.85) family.

Its subcellular location is the cell inner membrane. Its function is as follows. Forms an efflux pump with AaeA. Could function as a metabolic relief valve, allowing to eliminate certain compounds when they accumulate to high levels in the cell. In Pantoea ananatis (strain LMG 20103), this protein is p-hydroxybenzoic acid efflux pump subunit AaeB.